The primary structure comprises 425 residues: Imidazolonepropionase (425 aa).

Fe(3+) contacts are provided by His-78 and His-80. His-78 and His-80 together coordinate Zn(2+). 4-imidazolone-5-propanoate contacts are provided by Arg-87, Tyr-150, and His-183. Tyr-150 is an N-formimidoyl-L-glutamate binding site. Residue His-248 participates in Fe(3+) binding. Position 248 (His-248) interacts with Zn(2+). Gln-251 contacts 4-imidazolone-5-propanoate. Asp-323 provides a ligand contact to Fe(3+). Position 323 (Asp-323) interacts with Zn(2+). N-formimidoyl-L-glutamate is bound by residues Asn-325 and Gly-327. Residue Thr-328 coordinates 4-imidazolone-5-propanoate.

It belongs to the metallo-dependent hydrolases superfamily. HutI family. Zn(2+) serves as cofactor. Requires Fe(3+) as cofactor.

It localises to the cytoplasm. It catalyses the reaction 4-imidazolone-5-propanoate + H2O = N-formimidoyl-L-glutamate. Its pathway is amino-acid degradation; L-histidine degradation into L-glutamate; N-formimidoyl-L-glutamate from L-histidine: step 3/3. In terms of biological role, catalyzes the hydrolytic cleavage of the carbon-nitrogen bond in imidazolone-5-propanoate to yield N-formimidoyl-L-glutamate. It is the third step in the universal histidine degradation pathway. The chain is Imidazolonepropionase from Polaromonas sp. (strain JS666 / ATCC BAA-500).